We begin with the raw amino-acid sequence, 27 residues long: iraD leader peptide (27 aa).

In terms of biological role, a short protein whose stop codon overlaps with the start codon of downstream iraD; its mRNA secondary structure is predicted to fold and sequester the Shine-Dalgarno sequence of iraD. When this protein is expressed the downstream iraD is also expressed due to ribosomal coupling. This Escherichia coli (strain K12) protein is iraD leader peptide (idlP).